The sequence spans 1218 residues: Mgp-operon protein 3 (1218 aa).

Residues 1-25 (MKSKLKLKRYLLFLPLLPLGTLSLA) form the signal peptide. 4 disordered regions span residues 109-129 (QESQ…SGSN), 213-245 (HFGS…GFKL), 262-353 (EPLD…AVVS), and 411-440 (QDAT…PALT). Low complexity predominate over residues 116–129 (NGSQSGSSDTSGSN). The span at 217–231 (GQESSWNSQRSQKGL) shows a compositional bias: polar residues. A compositionally biased stretch (basic and acidic residues) spans 265–286 (DSTKEGKGKDESSWKNSEKTTA). Positions 301–342 (AGSASSLQGNGSNSSGLKSLLRSAPVSVPPSSTSNQTLSLSN) are enriched in low complexity. A compositionally biased stretch (polar residues) spans 411 to 428 (QDATSTNLPHAAGASQTG). A helical membrane pass occupies residues 1121 to 1141 (VGSSVGILLILLILGLGIGIP). Residues 1192–1204 (NNAAPKAPVKPAA) show a composition bias toward low complexity. The interval 1192–1218 (NNAAPKAPVKPAAPTAPRPPVQPPKKA) is disordered. Pro residues predominate over residues 1205-1218 (PTAPRPPVQPPKKA).

The protein localises to the cell membrane. In Mycoplasma pneumoniae (strain ATCC 29342 / M129 / Subtype 1) (Mycoplasmoides pneumoniae), this protein is Mgp-operon protein 3.